The sequence spans 166 residues: NADH-ubiquinone oxidoreductase chain 6 (166 aa).

The next 5 helical transmembrane spans lie at 1 to 21, 26 to 46, 47 to 67, 86 to 106, and 139 to 159; these read MMYF…AFAS, IYGG…IVSL, GGSF…LVVF, TVVL…YEFF, and CGGW…FVVL.

The protein belongs to the complex I subunit 6 family. In terms of assembly, core subunit of respiratory chain NADH dehydrogenase (Complex I) which is composed of 45 different subunits.

The protein resides in the mitochondrion inner membrane. The enzyme catalyses a ubiquinone + NADH + 5 H(+)(in) = a ubiquinol + NAD(+) + 4 H(+)(out). In terms of biological role, core subunit of the mitochondrial membrane respiratory chain NADH dehydrogenase (Complex I) which catalyzes electron transfer from NADH through the respiratory chain, using ubiquinone as an electron acceptor. Essential for the catalytic activity and assembly of complex I. This Tachyglossus aculeatus aculeatus (Southeast Australian short-beaked echidna) protein is NADH-ubiquinone oxidoreductase chain 6 (MT-ND6).